The sequence spans 354 residues: Guanine nucleotide-binding protein G(o) subunit alpha (354 aa).

Residue G2 is the site of N-myristoyl glycine attachment. C3 carries S-palmitoyl cysteine lipidation. A G-alpha domain is found at 32 to 354 (KDVKLLLLGA…ANNLRGCGLY (323 aa)). The interval 35–48 (KLLLLGAGESGKST) is G1 motif. GTP is bound by residues E43, K46, S47, T48, S152, L176, R177, T178, and R179. S47 lines the Mg(2+) pocket. The tract at residues 174–182 (DILRTRVKT) is G2 motif. A Mg(2+)-binding site is contributed by T182. Positions 197-206 (FRLFDVGGQR) are G3 motif. Residue Q205 is modified to 5-glutamyl histamine. Residues 266 to 273 (ILFLNKKD) are G4 motif. Residues N270, D273, and C325 each contribute to the GTP site. Residues 324–329 (TCATDT) form a G5 motif region. A lipid anchor (S-palmitoyl cysteine) is attached at C351.

Belongs to the G-alpha family. G(i/o/t/z) subfamily. In terms of assembly, g proteins are composed of 3 units; alpha, beta and gamma. The alpha chain contains the guanine nucleotide binding site. Forms a complex with GNB1 and GNG3. Interacts with RGS14. Interacts with RGS16. Interacts with RGS19. Interacts (when palmitoylated) with ADGRG3. Histaminylated at Gln-205 residues by TGM2.

It localises to the cell membrane. The protein localises to the membrane. It carries out the reaction GTP + H2O = GDP + phosphate + H(+). The GTPase activity is promoted by GTPAse activators, such as RGS14, RGS16 and RGS19. In terms of biological role, guanine nucleotide-binding proteins (G proteins) function as transducers downstream of G protein-coupled receptors (GPCRs) in numerous signaling cascades. The alpha chain contains the guanine nucleotide binding site and alternates between an active, GTP-bound state and an inactive, GDP-bound state. Signaling by an activated GPCR promotes GDP release and GTP binding. The alpha subunit has a low GTPase activity that converts bound GTP to GDP, thereby terminating the signal. Both GDP release and GTP hydrolysis are modulated by numerous regulatory proteins. Signaling is mediated via effector proteins, such as adenylate cyclase. Inhibits adenylate cyclase activity, leading to decreased intracellular cAMP levels. This is Guanine nucleotide-binding protein G(o) subunit alpha (Gnao1) from Mus musculus (Mouse).